The sequence spans 477 residues: PTS system glucose-specific EIICB component (477 aa).

Over 1–14 (MFKNAFANLQKVGK) the chain is Cytoplasmic. The region spanning 1–388 (MFKNAFANLQ…LDLKTPGRED (388 aa)) is the PTS EIIC type-1 domain. The chain crosses the membrane as a helical span at residues 15-35 (SLMLPVSVLPIAGILLGVGSA). The Periplasmic portion of the chain corresponds to 36-50 (NFSWLPAVVSHVMAE). The chain crosses the membrane as a helical span at residues 51–71 (AGGSVFANMPLIFAIGVALGF). At 72–79 (TNNDGVSA) the chain is on the cytoplasmic side. The helical transmembrane segment at 80–100 (LAAVVAYGIMVKTMAVVAPLV) threads the bilayer. Over 101 to 111 (LHLPAEEIAAK) the chain is Periplasmic. The helical transmembrane segment at 112–132 (HLADTGVLGGIISGAIAAYMF) threads the bilayer. Over 133 to 151 (NRFYRIKLPEYLGFFAGKR) the chain is Cytoplasmic. A helical transmembrane segment spans residues 152–172 (FVPIISGLAAIFTGVVLSFVW). Over 173 to 190 (PPIGTAIQAFSQWAAYQN) the chain is Periplasmic. The chain crosses the membrane as a helical span at residues 191–211 (PVVAFGIYGFIERCLVPFGLH). Over 212-248 (HIWNVPFQMQIGEYTNAAGQVFHGDIPRYMAGDPTAG) the chain is Cytoplasmic. The chain crosses the membrane as a helical span at residues 249 to 269 (MLSGGFLFKMYGLPAAAIAIW). Residues 270–279 (HSAKPENRAK) lie on the Periplasmic side of the membrane. Residues 280 to 300 (VGGIMISAALTSFLTGITEPI) form a helical membrane-spanning segment. Residues 301–309 (EFSFMFVAP) lie on the Cytoplasmic side of the membrane. A helical transmembrane segment spans residues 310-330 (ILYIIHAILAGLAFPICILLG). Topologically, residues 331 to 355 (MRDGTSFSHGLIDFIVLSGNSSKLW) are periplasmic. The chain crosses the membrane as a helical span at residues 356-376 (LFPIVGAGYAIVYYTVFRVLI). Residues 377–477 (KALDLKTPGR…TEMDEYIRNS (101 aa)) are Cytoplasmic-facing. Residues 399–477 (SEMAPALVAA…TEMDEYIRNS (79 aa)) form the PTS EIIB type-1 domain. Cysteine 421 functions as the Phosphocysteine intermediate; for EIIB activity in the catalytic mechanism. Phosphocysteine is present on cysteine 421.

The protein localises to the cell inner membrane. The catalysed reaction is N(pros)-phospho-L-histidyl-[protein] + D-glucose(out) = D-glucose 6-phosphate(in) + L-histidyl-[protein]. In terms of biological role, the phosphoenolpyruvate-dependent sugar phosphotransferase system (sugar PTS), a major carbohydrate active transport system, catalyzes the phosphorylation of incoming sugar substrates concomitantly with their translocation across the cell membrane. The enzyme II complex composed of PtsG and Crr is involved in glucose transport. Also functions as a chemoreceptor monitoring the environment for changes in sugar concentration. It can also phosphorylate mannose, methyl alpha-glucoside and 2-deoxy-glucose. This is PTS system glucose-specific EIICB component (ptsG) from Salmonella typhimurium (strain LT2 / SGSC1412 / ATCC 700720).